The sequence spans 332 residues: MTSCNYQPSEWPGDESWARLNNNQYDKVGFLEGVYDEYTKNKEPVELKFAGVYSLGSPNNFFRVTPSPVPVPTPMSVPRNVPRNVPTPAAPTPVTLTYRVPVTHSVPVTTEVPVTHTIATQPVMQTVPVMTQTVPVVTVHDSSPVAHVQVPNVIEGFEPLEISGRGGNTRPNFGYDTRPTTRPTRPDFGSDIGFGTRPHPRPPSPRPPSPRPPHPRPPSPRPPHPRPPSPRPRPRPQPDRNWWSNRPRPHPWGPGPVIRRSWPNVYGFPIWFNQPMNSFPLGWDIITAREIYPNIRVVKADGIDVATTMDYQPERLNVETVNNIIIRSYGFY.

The interval 159 to 256 (PLEISGRGGN…PRPHPWGPGP (98 aa)) is disordered. The segment covering 201-231 (RPPSPRPPSPRPPHPRPPSPRPPHPRPPSPR) has biased composition (pro residues).

Its subcellular location is the virion. This is an uncharacterized protein from Acanthamoeba polyphaga (Amoeba).